A 358-amino-acid chain; its full sequence is Protein IncC (358 aa).

The segment at 1–101 (MGAIHEETAN…VGSRRQEETG (101 aa)) is disordered. Residues 88-99 (HRQEVGSRRQEE) are compositionally biased toward basic and acidic residues.

It belongs to the ParA family.

This is one of the proteins encoded by the trfB operon; it is involved in plasmid maintenance and replication. The polypeptide is Protein IncC (incC) (Escherichia coli).